The primary structure comprises 205 residues: GTP cyclohydrolase-2 (205 aa).

49–53 is a GTP binding site; that stretch reads RLHSE. C54, C65, and C67 together coordinate Zn(2+). Residues Q70, 92 to 94, and T114 contribute to the GTP site; that span reads EGR. The active-site Proton acceptor is D126. R128 functions as the Nucleophile in the catalytic mechanism. GTP is bound by residues T149 and K154.

Belongs to the GTP cyclohydrolase II family. It depends on Zn(2+) as a cofactor.

It carries out the reaction GTP + 4 H2O = 2,5-diamino-6-hydroxy-4-(5-phosphoribosylamino)-pyrimidine + formate + 2 phosphate + 3 H(+). The protein operates within cofactor biosynthesis; riboflavin biosynthesis; 5-amino-6-(D-ribitylamino)uracil from GTP: step 1/4. In terms of biological role, catalyzes the conversion of GTP to 2,5-diamino-6-ribosylamino-4(3H)-pyrimidinone 5'-phosphate (DARP), formate and pyrophosphate. In Pseudomonas aeruginosa (strain LESB58), this protein is GTP cyclohydrolase-2.